The primary structure comprises 389 residues: Succinate--CoA ligase [ADP-forming] subunit beta (389 aa).

An ATP-grasp domain is found at 9–244; sequence KEILRKFGVA…LDEEDPAEVE (236 aa). ATP-binding positions include Lys-46, 53–55, Glu-99, Ala-102, and Glu-107; that span reads GRG. Mg(2+) contacts are provided by Asn-199 and Asp-213. Residues Asn-264 and 321 to 323 each bind substrate; that span reads GIM.

This sequence belongs to the succinate/malate CoA ligase beta subunit family. Heterotetramer of two alpha and two beta subunits. Requires Mg(2+) as cofactor.

It carries out the reaction succinate + ATP + CoA = succinyl-CoA + ADP + phosphate. The enzyme catalyses GTP + succinate + CoA = succinyl-CoA + GDP + phosphate. Its pathway is carbohydrate metabolism; tricarboxylic acid cycle; succinate from succinyl-CoA (ligase route): step 1/1. Succinyl-CoA synthetase functions in the citric acid cycle (TCA), coupling the hydrolysis of succinyl-CoA to the synthesis of either ATP or GTP and thus represents the only step of substrate-level phosphorylation in the TCA. The beta subunit provides nucleotide specificity of the enzyme and binds the substrate succinate, while the binding sites for coenzyme A and phosphate are found in the alpha subunit. The chain is Succinate--CoA ligase [ADP-forming] subunit beta from Paraburkholderia xenovorans (strain LB400).